Reading from the N-terminus, the 685-residue chain is Putative lipase ROG1 (685 aa).

The Charge relay system role is filled by Ser-269.

This sequence belongs to the putative lipase ROG1 family.

The polypeptide is Putative lipase ROG1 (ROG1) (Saccharomyces cerevisiae (strain ATCC 204508 / S288c) (Baker's yeast)).